A 2873-amino-acid chain; its full sequence is WD repeat-containing protein 87 (2873 aa).

WD repeat units follow at residues 108-146, 199-239, 242-283, 368-407, 415-460, 516-553, and 565-604; these read PCRF…TGLQ, TSSG…PLHS, AHQS…RRLE, SILD…CPAK, NSQD…RLEK, LSSC…SSGS, and LHLC…IGIL. Disordered stretches follow at residues 1049 to 1124, 1177 to 1199, 1392 to 1413, 1531 to 1607, and 2199 to 2338; these read FSLD…ESGT, DKRD…GKEA, EKKT…ERKV, SKSK…QEER, and KRKE…EEVD. Basic residues-rich tracts occupy residues 1089-1101 and 1187-1197; these read VKKH…RGLK and KLKKKHKKKGK. Over residues 1549–1574 the composition is skewed to basic and acidic residues; it reads EVSREGEEKEQQVTEEQRHIQEEHKW. Over residues 1575-1586 the composition is skewed to basic residues; the sequence is ARIHRKRARAEK. Basic and acidic residues-rich tracts occupy residues 1587 to 1607 and 2204 to 2213; these read KRAQ…QEER and KRGDKPKEKF. Positions 2244-2276 are enriched in acidic residues; it reads SSEEEEEREEEEEREEEEEREEEEERKEEEEGE. Basic and acidic residues predominate over residues 2277-2287; that stretch reads EKQVEKEEEEK. The segment covering 2304–2337 has biased composition (acidic residues); it reads EVFEEKEEIMSEEETESLSDEEEEEESCSLEEEV.

The protein is WD repeat-containing protein 87 (WDR87) of Homo sapiens (Human).